A 395-amino-acid chain; its full sequence is Probable protein arginine N-methyltransferase 6.2 (395 aa).

A compositionally biased stretch (gly residues) spans methionine 1–glycine 11. A disordered region spans residues methionine 1–proline 37. The 346-residue stretch at aspartate 45–lysine 390 folds into the SAM-dependent MTase PRMT-type domain. Positions 58, 67, 91, 113, and 142 each coordinate S-adenosyl-L-methionine. Active-site residues include glutamate 156 and glutamate 165. A disordered region spans residues lysine 300 to aspartate 324. The span at glutamine 302–serine 317 shows a compositional bias: polar residues.

This sequence belongs to the class I-like SAM-binding methyltransferase superfamily. Protein arginine N-methyltransferase family. PRMT6 subfamily.

Functionally, arginine methyltransferase that can both catalyze the formation of omega-N monomethylarginine (MMA) and asymmetrical dimethylarginine (aDMA). This Oryza sativa subsp. indica (Rice) protein is Probable protein arginine N-methyltransferase 6.2 (PRMT6.2).